A 191-amino-acid chain; its full sequence is Glycerol-3-phosphate acyltransferase (191 aa).

6 helical membrane-spanning segments follow: residues 7-27, 51-71, 80-100, 115-135, 139-159, and 161-181; these read ILVLSYLIGSIPFGLILSYIG, KLAVVTLILDSLKGFVSVMLA, FVFMSALFSIIGHMFPVWLSF, FIEYKFVIYFTIFWIIVFVIF, SLSSIISTISIMLLVYTHYSA, and ESITFLVMSLLVIVQHIENIV.

This sequence belongs to the PlsY family. Probably interacts with PlsX.

It is found in the cell inner membrane. The enzyme catalyses an acyl phosphate + sn-glycerol 3-phosphate = a 1-acyl-sn-glycero-3-phosphate + phosphate. The protein operates within lipid metabolism; phospholipid metabolism. In terms of biological role, catalyzes the transfer of an acyl group from acyl-phosphate (acyl-PO(4)) to glycerol-3-phosphate (G3P) to form lysophosphatidic acid (LPA). This enzyme utilizes acyl-phosphate as fatty acyl donor, but not acyl-CoA or acyl-ACP. In Ehrlichia canis (strain Jake), this protein is Glycerol-3-phosphate acyltransferase.